Reading from the N-terminus, the 567-residue chain is Zinc finger protein 512 (567 aa).

The tract at residues 1-32 (MSSRLGAVPATSGPTTFKQQRSTRIVGAKNSR) is disordered. Polar residues predominate over residues 12 to 23 (SGPTTFKQQRST). Residues Lys18 and Lys84 each participate in a glycyl lysine isopeptide (Lys-Gly) (interchain with G-Cter in SUMO2) cross-link. Residues 86 to 148 (AATSHVEGSG…QARRIRKEPP (63 aa)) form a disordered region. The segment covering 119-130 (KKHKLYGRKQRP) has biased composition (basic residues). The C2H2-type 1 zinc finger occupies 197 to 220 (FTCHHCGKQLRSLAGMKYHVMANH). Lys227 is covalently cross-linked (Glycyl lysine isopeptide (Lys-Gly) (interchain with G-Cter in SUMO2)). A C2H2-type 2 zinc finger spans residues 287 to 310 (LKCHHCGKPYRSKAGLAYHLRSEH). Lys333 participates in a covalent cross-link: Glycyl lysine isopeptide (Lys-Gly) (interchain with G-Cter in SUMO2). The C2H2-type 3; atypical zinc-finger motif lies at 406–430 (IQCPNQGCEAVYSSVSGLKAHLGSC). The C2H2-type 4 zinc finger occupies 440-463 (YKCLLCQKEFVSESGVKYHINSVH). Residues 486–567 (QRQQEEEKRR…PKTNHKRGRK (82 aa)) form a disordered region. Over residues 495 to 508 (RQQHRSRRSLRRRQ) the composition is skewed to basic residues. Over residues 523–532 (VGKDQRRNNE) the composition is skewed to basic and acidic residues. The span at 556–567 (KPPKTNHKRGRK) shows a compositional bias: basic residues.

It belongs to the krueppel C2H2-type zinc-finger protein family.

The protein localises to the nucleus. Its function is as follows. May be involved in transcriptional regulation. The protein is Zinc finger protein 512 (ZNF512) of Pongo abelii (Sumatran orangutan).